Consider the following 513-residue polypeptide: MQVNPSEISELIKRRIENFDAAAEARNEGTVVSVGDGICRIHGLADVMFGEMLEFPDDTFGMALNLERDSVGAVLLGDYQHIKEGATVKCTGRILEVPVGDAMLGRVVDALGRPTDGKGPIKTEGSEPIEKVAPGVITREGVDQPVQTGLKAIDSMVPIGRGQRELIIGDRQTGKTAVAVDAIINQKDSGIKCIYVAVGQKNSTVANVVRKLEEHGAMDNTIVVNAGASESAAMQYIAPYAGCAMGEYFRDRGQDALIIYDDLTKQAWAYRQVSLLLRRPPGREAYPGDVFYLHSRLLERASRINAEEVERRTNGEVKGQTGSLTALPIIETQAGDVSAFVPTNVISITDGQIYLETDLFNSGVRPAVNAGLSVSRVGGSAQTKIIKKLGGGVRLALAQYRELAAFSQFASDLDETTRQQLERGKRTMELMKQGQYEPQSVGEMAFVLFAANEGYVDDVENDQVVRFEKALLDYLRAEHAELLQRITETGDYNDEIHAEMQKAMDAFKKNRTW.

ATP is bound at residue 169–176 (GDRQTGKT).

The protein belongs to the ATPase alpha/beta chains family. F-type ATPases have 2 components, CF(1) - the catalytic core - and CF(0) - the membrane proton channel. CF(1) has five subunits: alpha(3), beta(3), gamma(1), delta(1), epsilon(1). CF(0) has three main subunits: a(1), b(2) and c(9-12). The alpha and beta chains form an alternating ring which encloses part of the gamma chain. CF(1) is attached to CF(0) by a central stalk formed by the gamma and epsilon chains, while a peripheral stalk is formed by the delta and b chains.

Its subcellular location is the cell inner membrane. It carries out the reaction ATP + H2O + 4 H(+)(in) = ADP + phosphate + 5 H(+)(out). Functionally, produces ATP from ADP in the presence of a proton gradient across the membrane. The alpha chain is a regulatory subunit. This Halorhodospira halophila (strain DSM 244 / SL1) (Ectothiorhodospira halophila (strain DSM 244 / SL1)) protein is ATP synthase subunit alpha.